The chain runs to 253 residues: Serine/threonine-protein phosphatase 3 (253 aa).

Mn(2+) serves as cofactor. Post-translationally, phosphorylated by YegI.

It carries out the reaction O-phospho-L-seryl-[protein] + H2O = L-seryl-[protein] + phosphate. The catalysed reaction is O-phospho-L-threonyl-[protein] + H2O = L-threonyl-[protein] + phosphate. With respect to regulation, activity dramatically decreases in the presence of the general protein phosphatase inhibitor sodium phosphate. Slightly inhibited by sodium fluoride. Activity decreases in the presence of the metal chelator EDTA. Functionally, PP2C-like phosphatase that can dephosphorylate YegI. In vitro, can hydrolyze p-nitrophenyl phosphate (pNPP) to p-nitrophenol. The polypeptide is Serine/threonine-protein phosphatase 3 (Escherichia coli (strain K12)).